The following is a 478-amino-acid chain: Proline--tRNA ligase (478 aa).

This sequence belongs to the class-II aminoacyl-tRNA synthetase family. ProS type 3 subfamily. Homodimer.

Its subcellular location is the cytoplasm. It carries out the reaction tRNA(Pro) + L-proline + ATP = L-prolyl-tRNA(Pro) + AMP + diphosphate. Its function is as follows. Catalyzes the attachment of proline to tRNA(Pro) in a two-step reaction: proline is first activated by ATP to form Pro-AMP and then transferred to the acceptor end of tRNA(Pro). This chain is Proline--tRNA ligase, found in Methanoregula boonei (strain DSM 21154 / JCM 14090 / 6A8).